A 465-amino-acid chain; its full sequence is Uronate isomerase (465 aa).

This sequence belongs to the metallo-dependent hydrolases superfamily. Uronate isomerase family.

The enzyme catalyses D-glucuronate = D-fructuronate. It catalyses the reaction aldehydo-D-galacturonate = keto-D-tagaturonate. It participates in carbohydrate metabolism; pentose and glucuronate interconversion. The chain is Uronate isomerase from Bacillus velezensis (strain DSM 23117 / BGSC 10A6 / LMG 26770 / FZB42) (Bacillus amyloliquefaciens subsp. plantarum).